The primary structure comprises 173 residues: Large ribosomal subunit protein uL10 (173 aa).

Belongs to the universal ribosomal protein uL10 family. In terms of assembly, part of the ribosomal stalk of the 50S ribosomal subunit. The N-terminus interacts with L11 and the large rRNA to form the base of the stalk. The C-terminus forms an elongated spine to which L12 dimers bind in a sequential fashion forming a multimeric L10(L12)X complex.

Functionally, forms part of the ribosomal stalk, playing a central role in the interaction of the ribosome with GTP-bound translation factors. This is Large ribosomal subunit protein uL10 from Christiangramia forsetii (strain DSM 17595 / CGMCC 1.15422 / KT0803) (Gramella forsetii).